We begin with the raw amino-acid sequence, 76 residues long: UPF0248 protein MmarC7_1289 (76 aa).

This sequence belongs to the UPF0248 family.

This is UPF0248 protein MmarC7_1289 from Methanococcus maripaludis (strain C7 / ATCC BAA-1331).